Reading from the N-terminus, the 140-residue chain is Large ribosomal subunit protein uL16 (140 aa).

It belongs to the universal ribosomal protein uL16 family. Part of the 50S ribosomal subunit.

In terms of biological role, binds 23S rRNA and is also seen to make contacts with the A and possibly P site tRNAs. The sequence is that of Large ribosomal subunit protein uL16 from Onion yellows phytoplasma (strain OY-M).